We begin with the raw amino-acid sequence, 462 residues long: Stabilizer of axonemal microtubules 1 (462 aa).

Mn stretches follow at residues 30–64 (KPCFFSEYTEKYPTYLSYVPRESFKPKLEYQKVNI), 65–97 (PMEGLSTTKRDFGTFNIVPVKHHLPEKATPIQD), 98–131 (EMDFLTTYNQHYNYCPANRVNPIKPRDNKHQCND), 132–165 (KMECVPTYKADYLPWNQQKRSSIRPPQSYRPASC), 166–199 (RFDHRTTHQDDYPIKNPVDTVSYKPPHGPKLCNI), 200–232 (PLESMTSYKSSYVAHPMEKRCVYEGEKYKPSEV), 233–266 (PFDSLTTHKDSYRGLIGEPAKTWKPAPNHPGLDI), 267–299 (PFPSNTEFREKFQPWPTPKIVPKESIAYIPPEG), 300–332 (KMDLLTTVQADYKCPNGVPAQSCRPVIHLKKSD), 333–366 (RFESSTTNREDFKHWANIRREPVKPNHQLKFSDE), 367–400 (PMEYMTTNRAHYVPHAPANTKSCKPTWSGPRVNI), and 401–434 (PLEGQTTYSTSFTPKEIQRCPASYPEPPGYIFDE).

Belongs to the FAM154 family. Associates with microtubules via the Mn regions.

It localises to the cytoplasm. It is found in the cytoskeleton. The protein resides in the microtubule organizing center. Its subcellular location is the centrosome. The protein localises to the centriole. It localises to the cilium basal body. It is found in the cilium axoneme. In terms of biological role, may play a role in the regulation of cilium length. Stabilizes microtubules at low temperature. This is Stabilizer of axonemal microtubules 1 (Saxo1) from Rattus norvegicus (Rat).